The sequence spans 194 residues: NADPH-flavin oxidoreductase (194 aa).

The protein belongs to the non-flavoprotein flavin reductase family. Homodimer. It can form an isobutylamine N-hydroxylase two component enzyme system formed of a flavin reductase component (VlmR) and a monooxygenase component (VlmH).

It carries out the reaction FADH2 + NADP(+) = FAD + NADPH + 2 H(+). The enzyme catalyses FMNH2 + NADP(+) = FMN + NADPH + 2 H(+). Functionally, involved in the biosynthesis of the azoxy antibiotic valanimycin, which has an antitumor activity. Catalyzes the reduction of FAD/FMN to FADH(2)/FMNH(2) which are subsequently used for the hydroxylation of isobutylamine by the isobutylamine N-hydroxylase VlmH. It can reduce either FAD or flavin mononucleotide (FMN) but prefers FAD. The enzyme has a strong preference for NADPH as acceptor. This Streptomyces viridifaciens protein is NADPH-flavin oxidoreductase.